The primary structure comprises 185 residues: Putative manganese efflux pump MntP (185 aa).

The next 6 membrane-spanning stretches (helical) occupy residues 3–23, 41–61, 70–90, 101–121, 123–143, and 165–185; these read PFAVVLLAFSMSVDAFAVSVG, AVFGVVEAITPVIGWVAGVAA, HWLAFGLLAAVGLHMLYAAVW, SFTVLMATAIGTSLDAMAVGV, LAFLNVNIVVVATAIGLATFL, and AVAGIALFGLGLSILIEHLTA.

The protein belongs to the MntP (TC 9.B.29) family.

The protein resides in the cell inner membrane. Its function is as follows. Probably functions as a manganese efflux pump. In Bradyrhizobium sp. (strain BTAi1 / ATCC BAA-1182), this protein is Putative manganese efflux pump MntP.